Consider the following 310-residue polypeptide: tRNA dimethylallyltransferase (310 aa).

An ATP-binding site is contributed by 11 to 18 (GPTAVGKT). 13–18 (TAVGKT) contacts substrate. The tract at residues 36 to 39 (DSMQ) is interaction with substrate tRNA.

Belongs to the IPP transferase family. Monomer. Requires Mg(2+) as cofactor.

It catalyses the reaction adenosine(37) in tRNA + dimethylallyl diphosphate = N(6)-dimethylallyladenosine(37) in tRNA + diphosphate. In terms of biological role, catalyzes the transfer of a dimethylallyl group onto the adenine at position 37 in tRNAs that read codons beginning with uridine, leading to the formation of N6-(dimethylallyl)adenosine (i(6)A). The protein is tRNA dimethylallyltransferase of Shouchella clausii (strain KSM-K16) (Alkalihalobacillus clausii).